Reading from the N-terminus, the 507-residue chain is ATP synthase subunit alpha (507 aa).

ATP is bound at residue 169–176 (GDRQTGKT).

The protein belongs to the ATPase alpha/beta chains family. In terms of assembly, F-type ATPases have 2 components, CF(1) - the catalytic core - and CF(0) - the membrane proton channel. CF(1) has five subunits: alpha(3), beta(3), gamma(1), delta(1), epsilon(1). CF(0) has three main subunits: a(1), b(2) and c(9-12). The alpha and beta chains form an alternating ring which encloses part of the gamma chain. CF(1) is attached to CF(0) by a central stalk formed by the gamma and epsilon chains, while a peripheral stalk is formed by the delta and b chains. In this bacterium the a and b subunits are transcribed but do not seem to be translated, thus the ATP synthase consists of the alpha, beta, gamma, delta, epsilon and c subunits.

It is found in the cell membrane. The enzyme catalyses ATP + H2O + 4 H(+)(in) = ADP + phosphate + 5 H(+)(out). In terms of biological role, produces ATP from ADP in the presence of a proton gradient across the membrane. The alpha chain is a regulatory subunit. The protein is ATP synthase subunit alpha of Moorella thermoacetica (strain ATCC 39073 / JCM 9320).